The sequence spans 886 residues: Linoleate 9S-lipoxygenase 5 (886 aa).

Positions 35-180 constitute a PLAT domain; it reads IEGEVVVMKK…RYRSDRVFFS (146 aa). A Lipoxygenase domain is found at 183–886; sequence AYLPSETPEL…GKGIPNSVSI (704 aa). The disordered stretch occupies residues 234-266; sequence GPDSVRPVLGGSPELPYPRRGKTGRKSTKSDPK. Positions 542, 547, 733, 737, and 886 each coordinate Fe cation.

Belongs to the lipoxygenase family. The cofactor is Fe cation. Expressed in roots.

The catalysed reaction is (9Z,12Z)-octadecadienoate + O2 = (9S)-hydroperoxy-(10E,12Z)-octadecadienoate. It catalyses the reaction (9Z,12Z,15Z)-octadecatrienoate + O2 = (9S)-hydroperoxy-(10E,12Z,15Z)-octadecatrienoate. It functions in the pathway lipid metabolism; oxylipin biosynthesis. Its function is as follows. 9S-lipoxygenase that can use linoleic acid or linolenic acid as substrates. Plant lipoxygenases may be involved in a number of diverse aspects of plant physiology including growth and development, pest resistance, and senescence or responses to wounding. Catalyzes the hydroperoxidation of lipids containing a cis,cis-1,4-pentadiene structure. Function as regulators of root development by controlling the emergence of lateral roots. 9S-lypoxygenase-derived oxylipins may play an antagonistic role to ethylene signaling in the control of responses involving oxidative stress, lipid peroxidation and plant defense. LOX5-derived oxylipins may facilitate performance of green peach aphid (Myzus persicae) on foliage. 9S-lypoxygenase-derived oxylipins are engaged during infection to control the balance between salicylic acid (SA) and jasmonate (JA) signaling to facilitate infection by the fungal pathogen Fusarium graminearum. 9S-lypoxygenase-derived oxylipins activate brassinosteroid signaling to promote cell wall-based defense and limit pathogen infection. Does not seem to contribute to the oxidation of free fatty acids during seed aging. The protein is Linoleate 9S-lipoxygenase 5 of Arabidopsis thaliana (Mouse-ear cress).